A 107-amino-acid chain; its full sequence is Putative double-stranded DNA mimic protein YE2228 (107 aa).

This sequence belongs to the putative dsDNA mimic protein family.

Its function is as follows. May act as a double-stranded DNA (dsDNA) mimic. Probably regulates the activity of a dsDNA-binding protein. The sequence is that of Putative double-stranded DNA mimic protein YE2228 from Yersinia enterocolitica serotype O:8 / biotype 1B (strain NCTC 13174 / 8081).